Here is a 148-residue protein sequence, read N- to C-terminus: uncharacterized protein (148 aa).

This is an uncharacterized protein from Saccharomyces cerevisiae (strain ATCC 204508 / S288c) (Baker's yeast).